The sequence spans 449 residues: Phosphoglucosamine mutase (449 aa).

Residue S101 is the Phosphoserine intermediate of the active site. S101, D241, D243, and D245 together coordinate Mg(2+). A Phosphoserine modification is found at S101.

The protein belongs to the phosphohexose mutase family. Requires Mg(2+) as cofactor. In terms of processing, activated by phosphorylation.

The enzyme catalyses alpha-D-glucosamine 1-phosphate = D-glucosamine 6-phosphate. In terms of biological role, catalyzes the conversion of glucosamine-6-phosphate to glucosamine-1-phosphate. In Acetivibrio thermocellus (strain ATCC 27405 / DSM 1237 / JCM 9322 / NBRC 103400 / NCIMB 10682 / NRRL B-4536 / VPI 7372) (Clostridium thermocellum), this protein is Phosphoglucosamine mutase.